A 172-amino-acid chain; its full sequence is MORN repeat-containing protein 5 (172 aa).

MORN repeat units follow at residues 8-30 (YIGE…TETK), 31-53 (YIGE…NGSR), and 54-75 (FDAV…DGLQ).

The protein localises to the cell projection. Its subcellular location is the cilium. It localises to the flagellum. The sequence is that of MORN repeat-containing protein 5 (MORN5) from Bos taurus (Bovine).